We begin with the raw amino-acid sequence, 379 residues long: MTTVDKRPSSRGYGDWRLSDIPQYKDGISTYEFVRATHEADYRTHQAEPVAGRTFGFNGIGRLTEVALHMPTKYTLHDQSSQYKESPSFFQGLMGVPDRGPVDLAAFQRETEELATAFENNGIKVHWVDYPEEPANPYGPLMGHVFLSWGSIWRGGSVISRFGFLPGMVGVSEYLAKWAWNTLNIPPLVAITEGAMEPGACNMIADEVLVTCLSASYDQRGTDQLVAAISKTSGTEEFHNLQLRPAVEGFFNKATGACAHPDININAIDVGKLVVSPAALDWDARTWLYDNNFELIEADPDEQREFLAPCNVLLLEPGKVIAHADCHKTNQKIRDAGVEVIEVTGTEIRKACGGIKCRVMQINREPGPTLADVRNRVWR.

The active-site Amidino-cysteine intermediate is the Cys357.

Belongs to the arginine deiminase family.

It catalyses the reaction 2-nitroimidazole + H2O = 1,3-dihydro-2H-imidazol-2-one + nitrite + H(+). In terms of biological role, involved in the biodegradation of 2-Nitroimidazole (2NI) which is a natural antibiotic and an analog of the synthetic nitroimidazoles used for treatment of tuberculosis, Chagas disease (also called American Trypanosomiasis) and cancer. Catalyzes the hydrolytic denitration of 2NI to produce imidazol-2-one and nitrite. It is also active against the 2NI synthetic derivative benznidazole. NnhA confers drug resistance to 2NI. In Mycobacterium sp. (strain JS330), this protein is 2-nitroimidazole nitrohydrolase (nnhA).